A 336-amino-acid polypeptide reads, in one-letter code: NmrA-like family domain-containing oxidoreductase FrzB (336 aa).

NADP(+) is bound at residue Lys135.

This sequence belongs to the NmrA-type oxidoreductase family.

The enzyme catalyses 4-{[(2S,5S)-5-[(4-hydroxyphenyl)methyl]-2,5-dihydropyrazin-2-yl]methyl}phenol + 2 NADPH + 2 H(+) = (S,S)-2,5-di-(p-hydroxybenzyl)piperazine + 2 NADP(+). It participates in secondary metabolite biosynthesis. Its function is as follows. NmrA-like family domain-containing oxidoreductase; part of the gene cluster that mediates the biosynthesis of the alkaloid (-)-FR901483, a potent immunosuppressant that shows efficacy in animal models and a probable inhibitor of purine nucleotide biosynthesis by targeting phosphoribosylpyrophosphate amidotransferase (PPAT). Within the pathway, FrzB catalyzes the reduction of 4-{[(2S,5S)-5-[(4-hydroxyphenyl)methyl]-2,5-dihydropyrazin-2-yl]methyl}phenol to produce the (S,S)-dityrosyl-piperazine intermediate. The biosynthesis of (-)-FR901483 starts with the condensation of two L-tyrosines to yield (S,S)-dityrosyl-piperazine. This process occurs in 3 steps with the non-canonical nonribosomal peptide synthetase FrzA catalyzing the reduction of L-tyrosine into L-tyrosinal, the spontaneous condensation of 2 L-tyrosinal units, and the subsequent reduction by the NmrA-like family domain-containing oxidoreductase FrzB. The cytochrome P450 monooxygenase FrzC then performs coupling between N10 and C1' to morph the piperazine into a 1,4-diazabicyclo[3.2.1]octane spiro-fused to a 2,5-cyclohexadienone. The dienone portion is further reduced to cyclohexanone by the flavin-dependent reductase FrzD. The methyltranserases (MTs) FrzE and FrzF are then involved in the methylation at the C10' amine and the C4 phenolic oxygen, respectively. The order of the two MTs appear to be interchangeable. Cleavage of the C9-N10' bond by the dioxygenase FrzG then leads to formation of a conjugated iminium. In addition to the oxidation of C9, an additional dehydrogenation between C7 and C8 can occur to give a likely shunt product. The next biosynthetic step is the intramolecular aldol condensation catalyzed by the newly identified aldolase FrzH to yield an aza-tricyclic product with the formation of a C9-C3' bond. The short-chain dehydrogenase/reductase FrzI then produces dephospho-(-)-FR901483 that is phosphorylated at C4'-OH into (-)-FR901483 by the phosphotransferase FrzJ. The protein is NmrA-like family domain-containing oxidoreductase FrzB of Cladobotryum sp.